Here is a 348-residue protein sequence, read N- to C-terminus: 3-isopropylmalate dehydrogenase (348 aa).

Glycine 76–glutamate 87 lines the NAD(+) pocket. The substrate site is built by arginine 94, arginine 104, arginine 132, and aspartate 217. Residues aspartate 217, aspartate 241, and aspartate 245 each coordinate Mg(2+). Glycine 275 to asparagine 287 lines the NAD(+) pocket.

This sequence belongs to the isocitrate and isopropylmalate dehydrogenases family. LeuB type 1 subfamily. As to quaternary structure, homodimer. It depends on Mg(2+) as a cofactor. The cofactor is Mn(2+).

It is found in the cytoplasm. The enzyme catalyses (2R,3S)-3-isopropylmalate + NAD(+) = 4-methyl-2-oxopentanoate + CO2 + NADH. It functions in the pathway amino-acid biosynthesis; L-leucine biosynthesis; L-leucine from 3-methyl-2-oxobutanoate: step 3/4. Its function is as follows. Catalyzes the oxidation of 3-carboxy-2-hydroxy-4-methylpentanoate (3-isopropylmalate) to 3-carboxy-4-methyl-2-oxopentanoate. The product decarboxylates to 4-methyl-2 oxopentanoate. The polypeptide is 3-isopropylmalate dehydrogenase (Staphylococcus aureus (strain NCTC 8325 / PS 47)).